Reading from the N-terminus, the 900-residue chain is Bifunctional uridylyltransferase/uridylyl-removing enzyme (900 aa).

A uridylyltransferase region spans residues 1–342 (MPQVDPELFD…PCEQPVQIQP (342 aa)). Residues 343-705 (LNSRFQLRDG…TTQREFESGS (363 aa)) are uridylyl-removing. The HD domain occupies 461 to 583 (VDAHTLNLIK…VGDQTHLDYL (123 aa)). 2 consecutive ACT domains span residues 706–789 (QIFI…IIQR) and 816–891 (VLEV…DNGR).

Belongs to the GlnD family. Mg(2+) serves as cofactor.

The catalysed reaction is [protein-PII]-L-tyrosine + UTP = [protein-PII]-uridylyl-L-tyrosine + diphosphate. It carries out the reaction [protein-PII]-uridylyl-L-tyrosine + H2O = [protein-PII]-L-tyrosine + UMP + H(+). Uridylyltransferase (UTase) activity is inhibited by glutamine, while glutamine activates uridylyl-removing (UR) activity. Modifies, by uridylylation and deuridylylation, the PII regulatory proteins (GlnB and homologs), in response to the nitrogen status of the cell that GlnD senses through the glutamine level. Under low glutamine levels, catalyzes the conversion of the PII proteins and UTP to PII-UMP and PPi, while under higher glutamine levels, GlnD hydrolyzes PII-UMP to PII and UMP (deuridylylation). Thus, controls uridylylation state and activity of the PII proteins, and plays an important role in the regulation of nitrogen assimilation and metabolism. This is Bifunctional uridylyltransferase/uridylyl-removing enzyme from Pseudomonas aeruginosa (strain LESB58).